The sequence spans 100 residues: U-myrmeciitoxin(01)-Mg7b (100 aa).

The first 17 residues, Met-1 to Ala-17, serve as a signal peptide directing secretion. The propeptide occupies Ile-18–Pro-50. The O-linked (GalNAc...) serine glycan is linked to Ser-85. O-linked (GalNAc...) threonine glycosylation is found at Thr-94 and Thr-95.

It belongs to the formicidae venom precursor-01 superfamily. Glycosylation is critical to maintaining the aqueous solubility of this protein, but does not directly contribute to its activity. Expressed by the venom gland.

It is found in the secreted. The protein resides in the target cell membrane. Functionally, neurotoxin that triggers pain behavior and inflammation in mammals, and is paralytic and lethal to insects. Causes a time-dependent increase in cell leak current. May act by targeting membranes. This chain is U-myrmeciitoxin(01)-Mg7b, found in Myrmecia gulosa (Red bulldog ant).